A 138-amino-acid polypeptide reads, in one-letter code: Acidic phospholipase A2 inhibitor chain HPD-1I (138 aa).

Residues 1 to 16 (MRTLWIVAVCLIGVEG) form the signal peptide. Disulfide bonds link C42–C131, C44–C60, C59–C111, C65–C138, C66–C104, C73–C97, and C91–C102.

Heterodimer of an acidic and a basic chain; non-covalently linked. The basic chain is toxic and has phospholipase A2 activity (chain HDP-1P (AC Q1RP79) or HDP-2P (AC Q1RP78)) and the acidic chain is non-toxic and functions as its inhibitor (chain HPD-1I). Expressed by the venom gland.

Its subcellular location is the secreted. Heterodimer: slightly affects neuromuscular transmission acting presynaptically. It has a low catalytic activity, a low anticoagulant activity and weakly inhibits ADP-induced platelet aggregation. In terms of biological role, monomer: has no activity (neurotoxic, catalytic, anticoagulant and a ADP-induced platelet aggregation), but inhibits phospholipase A2. The polypeptide is Acidic phospholipase A2 inhibitor chain HPD-1I (Vipera nikolskii (Nikolsky's adder)).